Here is a 624-residue protein sequence, read N- to C-terminus: Ubiquitin carboxyl-terminal hydrolase 16 (624 aa).

Residues 46–620 enclose the USP domain; sequence VGLSNPANDC…EVYLLFYEIE (575 aa). Residue C55 is the Nucleophile of the active site. H424 serves as the catalytic Proton acceptor. The disordered stretch occupies residues 453–573; the sequence is SENPSRVASP…ATDTEASASA (121 aa). Positions 479 to 496 are enriched in low complexity; it reads SPPASTSTNSPLSLTPDS. Over residues 518 to 544 the composition is skewed to polar residues; the sequence is VSFQSTHSSSKQTISPTSAARNSSSLD. Residues 546–573 are compositionally biased toward low complexity; the sequence is ARLSSPASRSSLAERNASATDTEASASA.

It belongs to the peptidase C19 family.

The catalysed reaction is Thiol-dependent hydrolysis of ester, thioester, amide, peptide and isopeptide bonds formed by the C-terminal Gly of ubiquitin (a 76-residue protein attached to proteins as an intracellular targeting signal).. The polypeptide is Ubiquitin carboxyl-terminal hydrolase 16 (ubp16) (Emericella nidulans (strain FGSC A4 / ATCC 38163 / CBS 112.46 / NRRL 194 / M139) (Aspergillus nidulans)).